Here is a 770-residue protein sequence, read N- to C-terminus: Nucleus-vacuole junction protein 2 (770 aa).

At 1 to 5 (MASLK) the chain is on the cytoplasmic side. The chain crosses the membrane as a helical; Signal-anchor for type II membrane protein span at residues 6–26 (VFLAVYLLGGITFLPLVLFTL). Topologically, residues 27 to 770 (YKIHLLYSNL…EFEEQREPKL (744 aa)) are lumenal. The region spanning 114 to 266 (TALQEQILQR…WYYQLINASK (153 aa)) is the PH domain. N-linked (GlcNAc...) asparagine glycans are attached at residues N228, N263, N279, N300, N391, N528, and N529. Positions 304-504 (NQLTTKWLNA…YPTPNEVYRG (201 aa)) constitute an SMP-LTD domain. Disordered stretches follow at residues 541–566 (EGGM…LKDL), 578–600 (TQTT…TKSR), and 615–770 (KDNV…EPKL). Over residues 554 to 566 (LRPERKKENLKDL) the composition is skewed to basic and acidic residues. Residues 587–596 (NDDVSSSENS) are compositionally biased toward polar residues. N-linked (GlcNAc...) asparagine glycans are attached at residues N595 and N620. 2 positions are modified to phosphoserine: S640 and S669. Basic and acidic residues predominate over residues 679 to 688 (LEGRKEKDTE). N-linked (GlcNAc...) asparagine glycosylation is present at N700. Composition is skewed to polar residues over residues 713-725 (FSVS…NSLK) and 736-751 (LESS…QNRF). S717 bears the Phosphoserine mark. N-linked (GlcNAc...) asparagine glycosylation is present at N718. Phosphoserine is present on residues S720 and S723. The span at 756–770 (FKQDLEFEEQREPKL) shows a compositional bias: basic and acidic residues.

It localises to the endoplasmic reticulum membrane. Its subcellular location is the nucleus membrane. During endoplasmic reticulum (ER) stress or when cellular ceramide levels increase, induces contacts between the ER and medial-Golgi complex to facilitate non-vesicular transport of ceramides from the ER to the Golgi complex where they are converted to complex sphingolipids, preventing toxic ceramide accumulation. This chain is Nucleus-vacuole junction protein 2, found in Saccharomyces cerevisiae (strain ATCC 204508 / S288c) (Baker's yeast).